The chain runs to 189 residues: Flavin prenyltransferase UbiX (189 aa).

Residues 10-12 (GAS), Ser36, 91-94 (STNT), and Arg126 each bind FMN. Tyr156 and Lys172 together coordinate dimethylallyl phosphate.

It belongs to the UbiX/PAD1 family.

The enzyme catalyses dimethylallyl phosphate + FMNH2 = prenylated FMNH2 + phosphate. In terms of biological role, flavin prenyltransferase that catalyzes the synthesis of the prenylated FMN cofactor (prenyl-FMN) for 4-hydroxy-3-polyprenylbenzoic acid decarboxylase UbiD. The prenyltransferase is metal-independent and links a dimethylallyl moiety from dimethylallyl monophosphate (DMAP) to the flavin N5 and C6 atoms of FMN. In Aquifex aeolicus (strain VF5), this protein is Flavin prenyltransferase UbiX.